The following is a 132-amino-acid chain: NLP effector protein 15 (132 aa).

Positions 1-9 (MYSWYFPKD) match the Conserved undecapeptide motif I motif. The Hepta-peptide GHRHDWE motif II signature appears at 16–22 (GHRHDWE).

It belongs to the Necrosis inducing protein (NPP1) family.

The protein localises to the secreted. Functionally, secreted effector that contributes moderately to virulence during infection by P.capsici. Causes only small yellow areas at 3 days after inoculation of host C.annuum leaves; these areas expand somewhat and became necrotic at 7 days after inoculation. Leads only to chlorotic areas, without necrosis at 7 days after non-host N.benthamiana leaves infection. In Phytophthora capsici, this protein is NLP effector protein 15.